Here is a 118-residue protein sequence, read N- to C-terminus: IgW heavy chain V region W26 (118 aa).

Positions 1-109 (NIVLTQPESA…PQWGYWGSGT (109 aa)) constitute an Ig-like domain. Cysteines 22 and 93 form a disulfide.

In terms of tissue distribution, expressed mainly in lymphoid tissues including spleen, epigonal organ and circulating lymphocytes.

The polypeptide is IgW heavy chain V region W26 (Heterodontus francisci (Horn shark)).